The chain runs to 324 residues: Porphobilinogen deaminase 1 (324 aa).

S-(dipyrrolylmethanemethyl)cysteine is present on Cys-249.

The protein belongs to the HMBS family. Monomer. Dipyrromethane is required as a cofactor.

The catalysed reaction is 4 porphobilinogen + H2O = hydroxymethylbilane + 4 NH4(+). Its pathway is porphyrin-containing compound metabolism; protoporphyrin-IX biosynthesis; coproporphyrinogen-III from 5-aminolevulinate: step 2/4. Its function is as follows. Tetrapolymerization of the monopyrrole PBG into the hydroxymethylbilane pre-uroporphyrinogen in several discrete steps. The protein is Porphobilinogen deaminase 1 (hemC1) of Streptomyces avermitilis (strain ATCC 31267 / DSM 46492 / JCM 5070 / NBRC 14893 / NCIMB 12804 / NRRL 8165 / MA-4680).